Reading from the N-terminus, the 1076-residue chain is Nucleoporin NUP1 (1076 aa).

Low complexity predominate over residues 1 to 11 (MSSNTSSVMSS). Residues 1–39 (MSSNTSSVMSSPRVEKRSFSSTLKSFFTNPNKKRPSSKK) are disordered. Ser2 bears the N-acetylserine mark. Residues 19 to 30 (FSSTLKSFFTNP) show a composition bias toward polar residues. Phosphoserine occurs at positions 54 and 161. Disordered regions lie at residues 143–183 (SQSK…TNVG) and 224–260 (KKDNKDKEGNAGGDQKTSENRNNIKSSISNGNLATGP). Polar residues-rich tracts occupy residues 154 to 170 (LCTSSTPSPIKNGSCTR) and 243 to 260 (NRNNIKSSISNGNLATGP). The FXF 1 repeat unit spans residues 336–338 (FDF). The residue at position 381 (Thr381) is a Phosphothreonine. Ser383 is subject to Phosphoserine. Residues 384–386 (FNF) form an FXF 2 repeat. The tract at residues 403-518 (TTLFNFGGKS…SFVFGASDKQ (116 aa)) is disordered. FXFG repeat units follow at residues 406–409 (FNFG) and 422–425 (FKFG). Positions 426–439 (KTSEKSENHTESDA) are enriched in basic and acidic residues. 2 FXFG repeats span residues 448 to 451 (FSFG) and 484 to 487 (FDFG). Basic and acidic residues predominate over residues 488 to 505 (KTGDQKETKKGESEKDAS). FXFG repeat units lie at residues 510–513 (FVFG), 525–528 (FTFG), 543–546 (FTFG), and 571–574 (FTFG). Residues 548-743 (AATAKETHTK…SMKSTASTAA (196 aa)) are disordered. FXF repeat units lie at residues 591–593 (FSF), 614–616 (FSF), 636–638 (FSF), and 657–659 (FTF). 2 stretches are compositionally biased toward polar residues: residues 634 to 649 (PTFSFTEPAQKDSSVV) and 658 to 667 (TFASSKTSQP). The residue at position 637 (Ser637) is a Phosphoserine. One copy of the FXFG 9 repeat lies at 671-674 (FSFG). The FXF 7 repeat unit spans residues 689–691 (FSF). 2 FXFG repeats span residues 708-711 (FTFG) and 727-730 (FSFG). A compositionally biased stretch (low complexity) spans 708–723 (FTFGGSTTNNTTTTST). One copy of the FXF 8 repeat lies at 753–755 (FSF). An FXFG 12 repeat occupies 800–803 (FSFG). FXF repeat units follow at residues 819–821 (FSF) and 866–868 (FGF). One copy of the FXFG 13 repeat lies at 885-888 (FNFG). The FXF 11 repeat unit spans residues 929–931 (FNF). A disordered region spans residues 940 to 979 (GGSVFNMNGNTNANTVFAGSNNQPHQSQTPSFNTNSSFTP). The segment covering 944–964 (FNMNGNTNANTVFAGSNNQPH) has biased composition (polar residues). A compositionally biased stretch (low complexity) spans 965 to 979 (QSQTPSFNTNSSFTP). 3 FG repeats span residues 1008-1009 (FG), 1027-1028 (FG), and 1038-1039 (FG). The disordered stretch occupies residues 1025 to 1054 (SIFGGAGGVPTTSFGQPQSAPNQMGMGTNN). The span at 1034–1045 (PTTSFGQPQSAP) shows a compositional bias: polar residues. The tract at residues 1040–1076 (QPQSAPNQMGMGTNNGMSMGGGVMANRKIARMRHSKR) is interaction with KAP95.

Component of the nuclear pore complex (NPC). NPC constitutes the exclusive means of nucleocytoplasmic transport. NPCs allow the passive diffusion of ions and small molecules and the active, nuclear transport receptor-mediated bidirectional transport of macromolecules such as proteins, RNAs, ribonucleoparticles (RNPs), and ribosomal subunits across the nuclear envelope. Due to its 8-fold rotational symmetry, all subunits are present with 8 copies or multiples thereof. Interacts through its FG repeats with nuclear transport receptors. Binds to the nuclear basket of the NPC through NUP60. Interacts with KAP122. Phosphorylated by CDC28.

Its subcellular location is the nucleus. It localises to the nuclear pore complex. The protein resides in the nucleus membrane. Its function is as follows. Functions as a component of the nuclear pore complex (NPC). NPC components, collectively referred to as nucleoporins (NUPs), can play the role of both NPC structural components and of docking or interaction partners for transiently associated nuclear transport factors. Active directional transport is assured by both, a Phe-Gly (FG) repeat affinity gradient for these transport factors across the NPC and a transport cofactor concentration gradient across the nuclear envelope (GSP1 and GSP2 GTPases associated predominantly with GTP in the nucleus, with GDP in the cytoplasm). As one of the FG repeat nucleoporins NUP1 is involved in interactions with and guidance of nuclear transport receptors such as SRP1-KAP95 (importin alpha and beta) through the NPC. Like the closely related NUP2 it also plays an important role in disassembling and recycling SRP1-KAP95 to the cytoplasm after nuclear import. Upon entry of the heterotrimeric SRP1-KAP95-cargo complex in the nucleus, NUP1 binds through its C-terminus to KAP95, thus accelerating the release of KAP95 and, indirectly, of the nuclear localization signal (NLS)-containing cargo from the SRP1-KAP95-cargo complex. This chain is Nucleoporin NUP1 (NUP1), found in Saccharomyces cerevisiae (strain ATCC 204508 / S288c) (Baker's yeast).